The primary structure comprises 186 residues: Shikimate kinase (186 aa).

15-20 is a binding site for ATP; that stretch reads GAGKTT. Threonine 19 lines the Mg(2+) pocket. 3 residues coordinate substrate: aspartate 37, arginine 61, and glycine 83. Position 121 (arginine 121) interacts with ATP. A substrate-binding site is contributed by arginine 140.

The protein belongs to the shikimate kinase family. In terms of assembly, monomer. Mg(2+) is required as a cofactor.

The protein localises to the cytoplasm. The enzyme catalyses shikimate + ATP = 3-phosphoshikimate + ADP + H(+). It participates in metabolic intermediate biosynthesis; chorismate biosynthesis; chorismate from D-erythrose 4-phosphate and phosphoenolpyruvate: step 5/7. Its function is as follows. Catalyzes the specific phosphorylation of the 3-hydroxyl group of shikimic acid using ATP as a cosubstrate. This chain is Shikimate kinase, found in Psychrobacter arcticus (strain DSM 17307 / VKM B-2377 / 273-4).